A 127-amino-acid polypeptide reads, in one-letter code: uncharacterized protein (127 aa).

Belongs to the transcriptional regulatory CopG/NikR family.

This is an uncharacterized protein from Methanocaldococcus jannaschii (strain ATCC 43067 / DSM 2661 / JAL-1 / JCM 10045 / NBRC 100440) (Methanococcus jannaschii).